The primary structure comprises 213 residues: High frequency lysogenization protein HflD (213 aa).

The stretch at 79 to 126 (QGLNAELTRYTLSLMVLERKLSSAKGALDTLGNRINGLQRQLEHFDLQ) forms a coiled coil.

Belongs to the HflD family. Interacts with CII protein from phage lambda.

Its subcellular location is the cytoplasm. The protein resides in the cell inner membrane. Its function is as follows. Negative regulator of phage lambda lysogenization. Contributes to the degradation of the phage regulatory protein CII. Acts probably by holding CII on the membrane surface, away from the target promoters, but close to the FtsH protease. In Escherichia coli O127:H6 (strain E2348/69 / EPEC), this protein is High frequency lysogenization protein HflD.